Here is an 886-residue protein sequence, read N- to C-terminus: MIAKNFLLLLCFIALVNVESSPDEAVMIALRDSLKLSGNPNWSGSDPCKWSMFIKCDASNRVTAIQIGDRGISGKLPPDLGKLTSLTKFEVMRNRLTGPIPSLAGLKSLVTVYANDNDFTSVPEDFFSGLSSLQHVSLDNNPFDSWVIPPSLENATSLVDFSAVNCNLSGKIPDYLFEGKDFSSLTTLKLSYNSLVCEFPMNFSDSRVQVLMLNGQKGREKLHGSISFLQKMTSLTNVTLQGNSFSGPLPDFSGLVSLKSFNVRENQLSGLVPSSLFELQSLSDVALGNNLLQGPTPNFTAPDIKPDLNGLNSFCLDTPGTSCDPRVNTLLSIVEAFGYPVNFAEKWKGNDPCSGWVGITCTGTDITVINFKNLGLNGTISPRFADFASLRVINLSQNNLNGTIPQELAKLSNLKTLDVSKNRLCGEVPRFNTTIVNTTGNFEDCPNGNAGKKASSNAGKIVGSVIGILLALLLIGVAIFFLVKKKMQYHKMHPQQQSSDQDAFKITIENLCTGVSESGFSGNDAHLGEAGNIVISIQVLRDATYNFDEKNILGRGGFGIVYKGELHDGTKIAVKRMESSIISGKGLDEFKSEIAVLTRVRHRNLVVLHGYCLEGNERLLVYQYMPQGTLSRHIFYWKEEGLRPLEWTRRLIIALDVARGVEYLHTLAHQSFIHRDLKPSNILLGDDMHAKVADFGLVRLAPEGTQSIETKIAGTFGYLAPEYAVTGRVTTKVDVYSFGVILMELLTGRKALDVARSEEEVHLATWFRRMFINKGSFPKAIDEAMEVNEETLRSINIVAELANQCSSREPRDRPDMNHVVNVLVSLVVQWKPTERSSDSEDIYGIDYDTPLPQLILDSCFFGDNTLTSIPSRPSELESTFKSGQGR.

A signal peptide spans 1–20; that stretch reads MIAKNFLLLLCFIALVNVES. Over 21–460 the chain is Extracellular; sequence SPDEAVMIAL…GKKASSNAGK (440 aa). A glycan (N-linked (GlcNAc...) asparagine) is linked at N41. C48 and C56 form a disulfide bridge. 10 LRR repeats span residues 59–83, 84–106, 107–129, 131–155, 157–179, 182–206, 208–232, 233–254, 255–279, and 281–302; these read SNRV…LGKL, TSLT…LAGL, KSLV…FFSG, SSLQ…LENA, SLVD…LFEG, FSSL…FSDS, VQVL…LQKM, TSLT…DFSG, LVSL…LFEL, and SLSD…FTAP. N154, N167, and N202 each carry an N-linked (GlcNAc...) asparagine glycan. A glycan (N-linked (GlcNAc...) asparagine) is linked at N237. N298 carries an N-linked (GlcNAc...) asparagine glycan. 2 cysteine pairs are disulfide-bonded: C315/C323 and C353/C361. LRR repeat units follow at residues 363 to 386, 387 to 410, and 411 to 438; these read GTDI…RFAD, FASL…ELAK, and LSNL…IVNT. Residues N377, N394, N401, N432, and N437 are each glycosylated (N-linked (GlcNAc...) asparagine). A helical membrane pass occupies residues 461–481; sequence IVGSVIGILLALLLIGVAIFF. At 482–886 the chain is on the cytoplasmic side; it reads LVKKKMQYHK…ESTFKSGQGR (405 aa). Residues 547-827 form the Protein kinase domain; that stretch reads FDEKNILGRG…HVVNVLVSLV (281 aa). Residues 553–561 and K575 each bind ATP; that span reads LGRGGFGIV. D676 functions as the Proton acceptor in the catalytic mechanism.

This sequence belongs to the protein kinase superfamily. Ser/Thr protein kinase family. Expressed in siliques and flowers.

It is found in the membrane. It catalyses the reaction L-seryl-[protein] + ATP = O-phospho-L-seryl-[protein] + ADP + H(+). The enzyme catalyses L-threonyl-[protein] + ATP = O-phospho-L-threonyl-[protein] + ADP + H(+). Involved in auxin signal transduction and cell expansion and proliferation regulation. In Arabidopsis thaliana (Mouse-ear cress), this protein is Receptor-like kinase TMK2.